We begin with the raw amino-acid sequence, 67 residues long: Large ribosomal subunit protein bL31 (67 aa).

Positions 16, 18, 36, and 39 each coordinate Zn(2+).

Belongs to the bacterial ribosomal protein bL31 family. Type A subfamily. Part of the 50S ribosomal subunit. Zn(2+) serves as cofactor.

Binds the 23S rRNA. The chain is Large ribosomal subunit protein bL31 from Syntrophomonas wolfei subsp. wolfei (strain DSM 2245B / Goettingen).